A 176-amino-acid polypeptide reads, in one-letter code: Ribosome rescue factor SmrB (176 aa).

A Smr domain is found at leucine 98–glutamate 173.

This sequence belongs to the SmrB family. As to quaternary structure, associates with collided ribosomes, but not with correctly translating polysomes.

Functionally, acts as a ribosome collision sensor. Detects stalled/collided disomes (pairs of ribosomes where the leading ribosome is stalled and a second ribosome has collided with it) and endonucleolytically cleaves mRNA at the 5' boundary of the stalled ribosome. Stalled/collided disomes form a new interface (primarily via the 30S subunits) that binds SmrB. Cleaved mRNA becomes available for tmRNA ligation, leading to ribosomal subunit dissociation and rescue of stalled ribosomes. The sequence is that of Ribosome rescue factor SmrB from Buchnera aphidicola subsp. Schizaphis graminum (strain Sg).